Here is a 341-residue protein sequence, read N- to C-terminus: Glycerol-3-phosphate dehydrogenase [NAD(P)+] (341 aa).

NADPH is bound by residues S15, W16, R36, and K110. The sn-glycerol 3-phosphate site is built by K110, G139, and S141. Residue A143 coordinates NADPH. Residues K194, D247, S257, R258, and N259 each contribute to the sn-glycerol 3-phosphate site. K194 serves as the catalytic Proton acceptor. R258 lines the NADPH pocket. NADPH contacts are provided by V282 and E284.

This sequence belongs to the NAD-dependent glycerol-3-phosphate dehydrogenase family.

It localises to the cytoplasm. The enzyme catalyses sn-glycerol 3-phosphate + NAD(+) = dihydroxyacetone phosphate + NADH + H(+). It catalyses the reaction sn-glycerol 3-phosphate + NADP(+) = dihydroxyacetone phosphate + NADPH + H(+). It functions in the pathway membrane lipid metabolism; glycerophospholipid metabolism. Catalyzes the reduction of the glycolytic intermediate dihydroxyacetone phosphate (DHAP) to sn-glycerol 3-phosphate (G3P), the key precursor for phospholipid synthesis. This is Glycerol-3-phosphate dehydrogenase [NAD(P)+] from Xanthomonas oryzae pv. oryzae (strain MAFF 311018).